Here is a 1050-residue protein sequence, read N- to C-terminus: Probable E3 ubiquitin-protein ligase HERC3 (1050 aa).

RCC1 repeat units lie at residues 1 to 51 (MLCW…FLLE), 52 to 101 (DGEV…ALSD), 102 to 154 (RGQL…ALAA), 156 to 207 (GQFF…ALSL), 208 to 259 (SGAV…VLTK), 261 to 311 (GGVF…AFVP), and 313 to 366 (SGLI…IVKQ). The 100-residue stretch at 951–1050 (YKGDYSATHP…LDNYEGFSLA (100 aa)) folds into the HECT domain. The active-site Glycyl thioester intermediate is the Cys1018.

Ubiquitinated; which promotes degradation by the proteasome.

Its subcellular location is the cytoplasm. It localises to the cytoplasmic vesicle. The catalysed reaction is S-ubiquitinyl-[E2 ubiquitin-conjugating enzyme]-L-cysteine + [acceptor protein]-L-lysine = [E2 ubiquitin-conjugating enzyme]-L-cysteine + N(6)-ubiquitinyl-[acceptor protein]-L-lysine.. It participates in protein modification; protein ubiquitination. Its function is as follows. E3 ubiquitin-protein ligase which accepts ubiquitin from an E2 ubiquitin-conjugating enzyme in the form of a thioester and then directly transfers the ubiquitin to targeted substrates. The sequence is that of Probable E3 ubiquitin-protein ligase HERC3 (HERC3) from Homo sapiens (Human).